We begin with the raw amino-acid sequence, 242 residues long: Uridylate kinase (242 aa).

17–20 (KLSG) lines the ATP pocket. Gly59 lines the UMP pocket. ATP contacts are provided by Gly60 and Arg64. Residues Asp79 and 140 to 147 (TGNPFFTT) each bind UMP. ATP-binding residues include Thr167, Tyr173, and Asp176.

This sequence belongs to the UMP kinase family. In terms of assembly, homohexamer.

It localises to the cytoplasm. The enzyme catalyses UMP + ATP = UDP + ADP. The protein operates within pyrimidine metabolism; CTP biosynthesis via de novo pathway; UDP from UMP (UMPK route): step 1/1. Its activity is regulated as follows. Inhibited by UTP. Its function is as follows. Catalyzes the reversible phosphorylation of UMP to UDP. The protein is Uridylate kinase of Marinobacter nauticus (strain ATCC 700491 / DSM 11845 / VT8) (Marinobacter aquaeolei).